Consider the following 416-residue polypeptide: Serine hydroxymethyltransferase (416 aa).

(6S)-5,6,7,8-tetrahydrofolate contacts are provided by residues Leu-118 and Gly-122–Leu-124. N6-(pyridoxal phosphate)lysine is present on Lys-227. Residues Glu-242 and Ser-350–Phe-352 contribute to the (6S)-5,6,7,8-tetrahydrofolate site.

Belongs to the SHMT family. Homodimer. Pyridoxal 5'-phosphate serves as cofactor.

It is found in the cytoplasm. It catalyses the reaction (6R)-5,10-methylene-5,6,7,8-tetrahydrofolate + glycine + H2O = (6S)-5,6,7,8-tetrahydrofolate + L-serine. It participates in one-carbon metabolism; tetrahydrofolate interconversion. Its pathway is amino-acid biosynthesis; glycine biosynthesis; glycine from L-serine: step 1/1. Its function is as follows. Catalyzes the reversible interconversion of serine and glycine with tetrahydrofolate (THF) serving as the one-carbon carrier. This reaction serves as the major source of one-carbon groups required for the biosynthesis of purines, thymidylate, methionine, and other important biomolecules. Also exhibits THF-independent aldolase activity toward beta-hydroxyamino acids, producing glycine and aldehydes, via a retro-aldol mechanism. In Syntrophotalea carbinolica (strain DSM 2380 / NBRC 103641 / GraBd1) (Pelobacter carbinolicus), this protein is Serine hydroxymethyltransferase.